Here is a 318-residue protein sequence, read N- to C-terminus: Olfactory receptor 5G26 (318 aa).

Residues 1 to 28 lie on the Extracellular side of the membrane; the sequence is MMHRNQTVVTEFFFTGLTSSFHLQIVLF. Asn-5 is a glycosylation site (N-linked (GlcNAc...) asparagine). The helical transmembrane segment at 29–49 threads the bilayer; the sequence is LTFLCVYLATLLGNLGMIILI. Residues 50–56 are Cytoplasmic-facing; that stretch reads HLDTRLH. A helical membrane pass occupies residues 57–77; the sequence is IPMYFFLSHLSFVDACSSSVI. Topologically, residues 78–93 are extracellular; sequence SPKMLSDMFVDKKVIS. A helical transmembrane segment spans residues 94 to 114; sequence FLGCAIQLCLFSQFVVTECFL. A disulfide bond links Cys-97 and Cys-189. The Cytoplasmic segment spans residues 115–144; it reads LASMAYDRYVAICKPLLYTLIMSQRVCVQL. A helical membrane pass occupies residues 145 to 165; it reads VIGPYSIGFVSTMVHIISAFV. Residues 166 to 198 lie on the Extracellular side of the membrane; it reads LPYCGPNLINHFFCDLLPVLSLACANTQMKKRL. Residues 199–219 traverse the membrane as a helical segment; the sequence is LFIVAGILGVFSGIIILVSYV. Residues 220–239 are Cytoplasmic-facing; sequence YIAITILKISSADGRRKAFS. A helical transmembrane segment spans residues 240–260; it reads TCSSHLTAVSILYGTLFFIYV. The Extracellular portion of the chain corresponds to 261–271; the sequence is RPSSSFSLDIN. The helical transmembrane segment at 272–292 threads the bilayer; sequence KVVSLFYTTVIPMLNPFIYSL. At 293 to 318 the chain is on the cytoplasmic side; sequence RNKEVKDALIRTFEKQFCYSFQDKIL.

Belongs to the G-protein coupled receptor 1 family.

It is found in the cell membrane. Potential odorant receptor. The protein is Olfactory receptor 5G26 of Mus musculus (Mouse).